The sequence spans 368 residues: Quinolinate synthase (368 aa).

Positions 46 and 63 each coordinate iminosuccinate. Residue cysteine 110 participates in [4Fe-4S] cluster binding. Residues 141-143 (YVN) and serine 162 each bind iminosuccinate. A [4Fe-4S] cluster-binding site is contributed by cysteine 230. Residues 256–258 (HPE) and threonine 273 each bind iminosuccinate. A [4Fe-4S] cluster-binding site is contributed by cysteine 320.

The protein belongs to the quinolinate synthase family. Type 3 subfamily. Requires [4Fe-4S] cluster as cofactor.

The protein resides in the cytoplasm. The catalysed reaction is iminosuccinate + dihydroxyacetone phosphate = quinolinate + phosphate + 2 H2O + H(+). The protein operates within cofactor biosynthesis; NAD(+) biosynthesis; quinolinate from iminoaspartate: step 1/1. In terms of biological role, catalyzes the condensation of iminoaspartate with dihydroxyacetone phosphate to form quinolinate. This chain is Quinolinate synthase, found in Bacillus cereus (strain ATCC 14579 / DSM 31 / CCUG 7414 / JCM 2152 / NBRC 15305 / NCIMB 9373 / NCTC 2599 / NRRL B-3711).